Reading from the N-terminus, the 380-residue chain is 3-methylitaconate isomerase (380 aa).

This sequence belongs to the PrpF family. In terms of assembly, homotetramer.

The catalysed reaction is 2-methylene-3-methylsuccinate = dimethylmaleate. It participates in cofactor degradation; nicotinate degradation; propanoate and pyruvate from 6-hydroxynicotinate: step 6/8. With respect to regulation, inhibited by oxidized glutathione, p-chloromercuriphenylsulfonic acid and iodoacetic acid. Not inhibited by the chelating agent alpha,alpha-dipyridyl. Activity is slightly increased by EDTA. Not activated by Fe(2+), Mg(2+), Mn(2+) or Ca(2+). Unaffected by K(+), Na(+), NH4(+), Rb(+) or Li(+). Its function is as follows. Catalyzes the reversible isomerization of (R)-3-methylitaconate to 2,3-dimethylmaleate. Has very low isomerase activity with itaconate. In Eubacterium barkeri (Clostridium barkeri), this protein is 3-methylitaconate isomerase (mii).